We begin with the raw amino-acid sequence, 77 residues long: Acyl carrier protein (77 aa).

Positions 2 to 77 (SNIEERVKKI…AAIDYVSKNQ (76 aa)) constitute a Carrier domain. Ser-37 carries the post-translational modification O-(pantetheine 4'-phosphoryl)serine.

This sequence belongs to the acyl carrier protein (ACP) family. 4'-phosphopantetheine is transferred from CoA to a specific serine of apo-ACP by AcpS. This modification is essential for activity because fatty acids are bound in thioester linkage to the sulfhydryl of the prosthetic group.

The protein localises to the cytoplasm. Its pathway is lipid metabolism; fatty acid biosynthesis. Functionally, carrier of the growing fatty acid chain in fatty acid biosynthesis. The sequence is that of Acyl carrier protein from Shewanella denitrificans (strain OS217 / ATCC BAA-1090 / DSM 15013).